The following is a 314-amino-acid chain: Malate dehydrogenase (314 aa).

NAD(+) contacts are provided by residues 12 to 17 (GSGFTG) and Asp-36. Positions 87 and 93 each coordinate substrate. Residues Asn-100 and 123–125 (LTN) each bind NAD(+). Asn-125 is a binding site for substrate. Ser-149 is modified (phosphoserine). A substrate-binding site is contributed by Arg-156. The active-site Proton acceptor is the His-180.

This sequence belongs to the LDH/MDH superfamily. MDH type 3 family.

The enzyme catalyses (S)-malate + NAD(+) = oxaloacetate + NADH + H(+). Its function is as follows. Catalyzes the reversible oxidation of malate to oxaloacetate. The polypeptide is Malate dehydrogenase (Shouchella clausii (strain KSM-K16) (Alkalihalobacillus clausii)).